The following is a 52-amino-acid chain: Keratin-associated protein 19-2 (52 aa).

This sequence belongs to the KRTAP type 19 family. Interacts with hair keratins.

Functionally, in the hair cortex, hair keratin intermediate filaments are embedded in an interfilamentous matrix, consisting of hair keratin-associated proteins (KRTAP), which are essential for the formation of a rigid and resistant hair shaft through their extensive disulfide bond cross-linking with abundant cysteine residues of hair keratins. The matrix proteins include the high-sulfur and high-glycine-tyrosine keratins. This chain is Keratin-associated protein 19-2 (KRTAP19-2), found in Homo sapiens (Human).